Reading from the N-terminus, the 258-residue chain is Type III pantothenate kinase (258 aa).

7–14 (DVGNTRLK) lines the ATP pocket. Substrate contacts are provided by residues Y96 and 103–106 (GADR). The active-site Proton acceptor is the D105. Residue T133 coordinates ATP. A substrate-binding site is contributed by T183.

This sequence belongs to the type III pantothenate kinase family. Homodimer. NH4(+) is required as a cofactor. Requires K(+) as cofactor.

The protein localises to the cytoplasm. It carries out the reaction (R)-pantothenate + ATP = (R)-4'-phosphopantothenate + ADP + H(+). It functions in the pathway cofactor biosynthesis; coenzyme A biosynthesis; CoA from (R)-pantothenate: step 1/5. Catalyzes the phosphorylation of pantothenate (Pan), the first step in CoA biosynthesis. The polypeptide is Type III pantothenate kinase (Acidovorax ebreus (strain TPSY) (Diaphorobacter sp. (strain TPSY))).